The primary structure comprises 185 residues: Ribosome-recycling factor (185 aa).

Belongs to the RRF family.

The protein resides in the cytoplasm. Responsible for the release of ribosomes from messenger RNA at the termination of protein biosynthesis. May increase the efficiency of translation by recycling ribosomes from one round of translation to another. The protein is Ribosome-recycling factor of Enterococcus faecalis (strain ATCC 700802 / V583).